A 216-amino-acid polypeptide reads, in one-letter code: Probable nicotinate-nucleotide adenylyltransferase (216 aa).

The protein belongs to the NadD family.

It carries out the reaction nicotinate beta-D-ribonucleotide + ATP + H(+) = deamido-NAD(+) + diphosphate. Its pathway is cofactor biosynthesis; NAD(+) biosynthesis; deamido-NAD(+) from nicotinate D-ribonucleotide: step 1/1. Catalyzes the reversible adenylation of nicotinate mononucleotide (NaMN) to nicotinic acid adenine dinucleotide (NaAD). The polypeptide is Probable nicotinate-nucleotide adenylyltransferase (Citrifermentans bemidjiense (strain ATCC BAA-1014 / DSM 16622 / JCM 12645 / Bem) (Geobacter bemidjiensis)).